The chain runs to 384 residues: Queuine tRNA-ribosyltransferase (384 aa).

The Proton acceptor role is filled by Asp-103. Substrate is bound by residues 103-107 (DSGGF), Asp-157, Gln-200, and Gly-227. The segment at 258-264 (GVGTYRE) is RNA binding. Asp-277 acts as the Nucleophile in catalysis. Residues 282–286 (TRLAR) form an RNA binding; important for wobble base 34 recognition region. Zn(2+)-binding residues include Cys-315, Cys-317, Cys-320, and His-346.

Belongs to the queuine tRNA-ribosyltransferase family. In terms of assembly, homodimer. Within each dimer, one monomer is responsible for RNA recognition and catalysis, while the other monomer binds to the replacement base PreQ1. Requires Zn(2+) as cofactor.

It catalyses the reaction 7-aminomethyl-7-carbaguanine + guanosine(34) in tRNA = 7-aminomethyl-7-carbaguanosine(34) in tRNA + guanine. It participates in tRNA modification; tRNA-queuosine biosynthesis. In terms of biological role, catalyzes the base-exchange of a guanine (G) residue with the queuine precursor 7-aminomethyl-7-deazaguanine (PreQ1) at position 34 (anticodon wobble position) in tRNAs with GU(N) anticodons (tRNA-Asp, -Asn, -His and -Tyr). Catalysis occurs through a double-displacement mechanism. The nucleophile active site attacks the C1' of nucleotide 34 to detach the guanine base from the RNA, forming a covalent enzyme-RNA intermediate. The proton acceptor active site deprotonates the incoming PreQ1, allowing a nucleophilic attack on the C1' of the ribose to form the product. After dissociation, two additional enzymatic reactions on the tRNA convert PreQ1 to queuine (Q), resulting in the hypermodified nucleoside queuosine (7-(((4,5-cis-dihydroxy-2-cyclopenten-1-yl)amino)methyl)-7-deazaguanosine). This is Queuine tRNA-ribosyltransferase from Synechococcus elongatus (strain ATCC 33912 / PCC 7942 / FACHB-805) (Anacystis nidulans R2).